The primary structure comprises 271 residues: Formamidopyrimidine-DNA glycosylase (271 aa).

Residue Pro-2 is the Schiff-base intermediate with DNA of the active site. Glu-3 serves as the catalytic Proton donor. Lys-56 serves as the catalytic Proton donor; for beta-elimination activity. The DNA site is built by His-89, Arg-107, and Arg-151. The FPG-type zinc-finger motif lies at 236 to 270 (MVYDRAGLPCRVCAAPIKSIRQGQRSSFYCATCQK). The active-site Proton donor; for delta-elimination activity is Arg-260.

Belongs to the FPG family. As to quaternary structure, monomer. Zn(2+) is required as a cofactor.

The enzyme catalyses Hydrolysis of DNA containing ring-opened 7-methylguanine residues, releasing 2,6-diamino-4-hydroxy-5-(N-methyl)formamidopyrimidine.. It carries out the reaction 2'-deoxyribonucleotide-(2'-deoxyribose 5'-phosphate)-2'-deoxyribonucleotide-DNA = a 3'-end 2'-deoxyribonucleotide-(2,3-dehydro-2,3-deoxyribose 5'-phosphate)-DNA + a 5'-end 5'-phospho-2'-deoxyribonucleoside-DNA + H(+). In terms of biological role, involved in base excision repair of DNA damaged by oxidation or by mutagenic agents. Acts as a DNA glycosylase that recognizes and removes damaged bases. Has a preference for oxidized purines, such as 7,8-dihydro-8-oxoguanine (8-oxoG). Has AP (apurinic/apyrimidinic) lyase activity and introduces nicks in the DNA strand. Cleaves the DNA backbone by beta-delta elimination to generate a single-strand break at the site of the removed base with both 3'- and 5'-phosphates. The protein is Formamidopyrimidine-DNA glycosylase of Polaromonas naphthalenivorans (strain CJ2).